Here is a 162-residue protein sequence, read N- to C-terminus: UPF0262 protein AZC_3148 (162 aa).

Belongs to the UPF0262 family.

This chain is UPF0262 protein AZC_3148, found in Azorhizobium caulinodans (strain ATCC 43989 / DSM 5975 / JCM 20966 / LMG 6465 / NBRC 14845 / NCIMB 13405 / ORS 571).